The sequence spans 279 residues: Acetylglutamate kinase (279 aa).

Substrate is bound by residues 64–65, Arg86, and Asn177; that span reads GG.

Belongs to the acetylglutamate kinase family. ArgB subfamily.

It is found in the cytoplasm. It catalyses the reaction N-acetyl-L-glutamate + ATP = N-acetyl-L-glutamyl 5-phosphate + ADP. Its pathway is amino-acid biosynthesis; L-arginine biosynthesis; N(2)-acetyl-L-ornithine from L-glutamate: step 2/4. Functionally, catalyzes the ATP-dependent phosphorylation of N-acetyl-L-glutamate. This chain is Acetylglutamate kinase, found in Campylobacter jejuni subsp. jejuni serotype O:2 (strain ATCC 700819 / NCTC 11168).